The following is a 382-amino-acid chain: Lipoyl synthase, mitochondrial (382 aa).

The transit peptide at 1–30 directs the protein to the mitochondrion; it reads MHGRRHLAASLARALTYAPSRSISSTPSLL. Residues 25–34 are compositionally biased toward polar residues; the sequence is STPSLLQTLD. Residues 25–46 are disordered; that stretch reads STPSLLQTLDPSTPSPAAAPPT. The [4Fe-4S] cluster site is built by Cys112, Cys117, Cys123, Cys143, Cys147, Cys150, and Ser359. Residues 128–348 enclose the Radical SAM core domain; the sequence is ETGTATATIM…RSLGVDMGFR (221 aa).

This sequence belongs to the radical SAM superfamily. Lipoyl synthase family. [4Fe-4S] cluster serves as cofactor.

It localises to the mitochondrion. The enzyme catalyses [[Fe-S] cluster scaffold protein carrying a second [4Fe-4S](2+) cluster] + N(6)-octanoyl-L-lysyl-[protein] + 2 oxidized [2Fe-2S]-[ferredoxin] + 2 S-adenosyl-L-methionine + 4 H(+) = [[Fe-S] cluster scaffold protein] + N(6)-[(R)-dihydrolipoyl]-L-lysyl-[protein] + 4 Fe(3+) + 2 hydrogen sulfide + 2 5'-deoxyadenosine + 2 L-methionine + 2 reduced [2Fe-2S]-[ferredoxin]. Its pathway is protein modification; protein lipoylation via endogenous pathway; protein N(6)-(lipoyl)lysine from octanoyl-[acyl-carrier-protein]: step 2/2. In terms of biological role, catalyzes the radical-mediated insertion of two sulfur atoms into the C-6 and C-8 positions of the octanoyl moiety bound to the lipoyl domains of lipoate-dependent enzymes, thereby converting the octanoylated domains into lipoylated derivatives. This is Lipoyl synthase, mitochondrial from Oryza sativa subsp. japonica (Rice).